The chain runs to 1034 residues: Multidrug export protein AcrF (1034 aa).

Topologically, residues methionine 1–proline 9 are cytoplasmic. The chain crosses the membrane as a helical span at residues isoleucine 10–leucine 28. Over glutamine 29 to glutamate 339 the chain is Periplasmic. The chain crosses the membrane as a helical span at residues valine 340–leucine 359. The Cytoplasmic portion of the chain corresponds to glutamine 360–threonine 365. A helical membrane pass occupies residues leucine 366–alanine 385. The Periplasmic segment spans residues phenylalanine 386–asparagine 391. Residues threonine 392–valine 413 traverse the membrane as a helical segment. At glutamate 414–alanine 441 the chain is on the cytoplasmic side. Residues leucine 442–glycine 460 form a helical membrane-spanning segment. At glycine 461–threonine 473 the chain is on the periplasmic side. A helical transmembrane segment spans residues isoleucine 474–leucine 496. Residues leucine 497–threonine 537 lie on the Cytoplasmic side of the membrane. Residues glycine 538 to leucine 556 traverse the membrane as a helical segment. Residues arginine 557–glutamine 871 are Periplasmic-facing. A helical membrane pass occupies residues alanine 872–tyrosine 891. Topologically, residues glutamate 892 to proline 897 are cytoplasmic. A helical transmembrane segment spans residues valine 898–leucine 917. The Periplasmic portion of the chain corresponds to phenylalanine 918 to aspartate 923. A helical membrane pass occupies residues valine 924–valine 945. Over glutamate 946–proline 973 the chain is Cytoplasmic. Residues isoleucine 974–asparagine 992 form a helical membrane-spanning segment. At glycine 993–glycine 1005 the chain is on the periplasmic side. Residues valine 1006 to isoleucine 1028 traverse the membrane as a helical segment. The Cytoplasmic segment spans residues arginine 1029–glycine 1034.

Belongs to the resistance-nodulation-cell division (RND) (TC 2.A.6) family. In terms of assembly, part of the tripartite efflux system AcrEF-TolC, which is composed of an inner membrane transporter, AcrF, a periplasmic membrane fusion protein, AcrE, and an outer membrane component, TolC. The complex forms a large protein conduit and can translocate molecules across both the inner and outer membranes.

The protein resides in the cell inner membrane. Its function is as follows. Part of the tripartite efflux system AcrEF-TolC. Involved in the efflux of indole and organic solvents. The protein is Multidrug export protein AcrF (acrF) of Escherichia coli (strain K12).